A 234-amino-acid polypeptide reads, in one-letter code: Short neuropeptide F (234 aa).

Positions 1 to 22 (MYRINLTTFTLLLVLAVGSLMS) are cleaved as a signal peptide. The propeptide occupies 23–56 (ESLHPSDGAINDLYEYLLQREYAAPVSYADHQIK). A phenylalanine amide mark is found at F69 and F101. Position 132 is a tryptophan amide (W132). At F165 the chain carries Phenylalanine amide. The span at 181 to 190 (TTGQQAQPAN) shows a compositional bias: polar residues. Residues 181-234 (TTGQQAQPANEASEKRAPTQRLRWGRSDPALAKDSSEDKALDVEESENTNADDK) are disordered. W204 is modified (tryptophan amide). The propeptide occupies 207 to 234 (SDPALAKDSSEDKALDVEESENTNADDK).

It belongs to the NPY family. Expressed in all body parts of larva, pupae and adults.

Its subcellular location is the secreted. In terms of biological role, plays a role in controlling food intake and regulating body size. The sequence is that of Short neuropeptide F from Anopheles gambiae (African malaria mosquito).